The sequence spans 594 residues: Aspartate--tRNA(Asp/Asn) ligase (594 aa).

E175 contacts L-aspartate. Positions 199–202 (QIYK) are aspartate. The L-aspartate site is built by R221 and H454. 221 to 223 (RDE) serves as a coordination point for ATP. E488 is a binding site for ATP. Residue R495 coordinates L-aspartate. An ATP-binding site is contributed by 540 to 543 (GIDR).

This sequence belongs to the class-II aminoacyl-tRNA synthetase family. Type 1 subfamily. In terms of assembly, homodimer.

It is found in the cytoplasm. It catalyses the reaction tRNA(Asx) + L-aspartate + ATP = L-aspartyl-tRNA(Asx) + AMP + diphosphate. Its function is as follows. Aspartyl-tRNA synthetase with relaxed tRNA specificity since it is able to aspartylate not only its cognate tRNA(Asp) but also tRNA(Asn). Reaction proceeds in two steps: L-aspartate is first activated by ATP to form Asp-AMP and then transferred to the acceptor end of tRNA(Asp/Asn). The sequence is that of Aspartate--tRNA(Asp/Asn) ligase from Chelativorans sp. (strain BNC1).